Reading from the N-terminus, the 769-residue chain is Ligand-dependent nuclear receptor-interacting factor 1 (769 aa).

Glycyl lysine isopeptide (Lys-Gly) (interchain with G-Cter in SUMO2) cross-links involve residues lysine 259 and lysine 279. Over residues 378–387 the composition is skewed to polar residues; the sequence is QIDQQNSVSP. The interval 378 to 400 is disordered; the sequence is QIDQQNSVSPDTPVRKDTLQTVS. Phosphoserine is present on residues serine 402, serine 430, and serine 436. A Glycyl lysine isopeptide (Lys-Gly) (interchain with G-Cter in SUMO2) cross-link involves residue lysine 446. Residue serine 502 is modified to Phosphoserine. The disordered stretch occupies residues 528–562; sequence DQEPKIHNEMASTSDKGAQGRNDKKDSQGRSNKAL. Positions 580-584 match the PxVxL motif motif; the sequence is LRVCL. Serine 599 carries the post-translational modification Phosphoserine. Residue lysine 605 forms a Glycyl lysine isopeptide (Lys-Gly) (interchain with G-Cter in SUMO2) linkage. Short sequence motifs (nuclear localization signal) lie at residues 628 to 631 and 642 to 645; these read KKRK. A Glycyl lysine isopeptide (Lys-Gly) (interchain with G-Cter in SUMO2) cross-link involves residue lysine 702. Threonine 732 is subject to Phosphothreonine. A coiled-coil region spans residues 740-769; sequence IRDEKIRRLKQVLREKEAALEEMRKKMHQK.

Belongs to the LRIF1 family. As to quaternary structure, interacts with RARA. Interacts with SMCHD1; leading to recruitment to inactivated chromosome X in females. Interacts (via PxVxL motif) with HP1 (CBX1/HP1-beta, CBX3/HP1-gamma and CBX5/HP1-alpha). In terms of tissue distribution, widely expressed, with the highest expression levels in heart, liver and placenta.

It localises to the chromosome. The protein resides in the nucleus matrix. Together with SMCHD1, involved in chromosome X inactivation in females by promoting the compaction of heterochromatin. Also able to repress the ligand-induced transcriptional activity of retinoic acid receptor alpha (RARA), possibly through direct recruitment of histone deacetylases. Also required for silencing of the DUX4 locus in somatic cells. The protein is Ligand-dependent nuclear receptor-interacting factor 1 of Homo sapiens (Human).